The following is a 65-amino-acid chain: Venom protein Vn4.6 (65 aa).

The first 23 residues, 1-23 (MSKIILAIFLIVLCGLIFVTVDA), serve as a signal peptide directing secretion.

In terms of processing, contains 2 disulfide bonds. As to expression, expressed by the venom gland.

It localises to the secreted. Endoparasitoid venom protein that interferes with the activation of host hemolymph prophenoloxidase. May act in conjunction with other venom proteins (such as Vn50), by competitive binding to the zymogen and thereby interrupting the enzyme. This Cotesia rubecula (Cabbage white butterfly parasite) protein is Venom protein Vn4.6.